The primary structure comprises 341 residues: Phenylalanine--tRNA ligase alpha subunit (341 aa).

Glu-254 provides a ligand contact to Mg(2+).

This sequence belongs to the class-II aminoacyl-tRNA synthetase family. Phe-tRNA synthetase alpha subunit type 1 subfamily. As to quaternary structure, tetramer of two alpha and two beta subunits. Mg(2+) is required as a cofactor.

It is found in the cytoplasm. It carries out the reaction tRNA(Phe) + L-phenylalanine + ATP = L-phenylalanyl-tRNA(Phe) + AMP + diphosphate + H(+). This Chlorobium phaeobacteroides (strain DSM 266 / SMG 266 / 2430) protein is Phenylalanine--tRNA ligase alpha subunit.